We begin with the raw amino-acid sequence, 165 residues long: RxLR effector protein PITG_09218 (165 aa).

A signal peptide spans 1-24; that stretch reads MRFSAFLTLLLVAFVASCSTFASA. The RxLR-dEER signature appears at 31 to 57; it reads RRLRADAAPVPVNKDNVAKLAGGFLEK. The chain crosses the membrane as a helical span at residues 129-149; the sequence is VTLGATVAGFAIYGAYKALFD.

Belongs to the RxLR effector family.

It is found in the secreted. The protein localises to the host mitochondrion membrane. It localises to the host endoplasmic reticulum membrane. Its function is as follows. Effector that enhances P.infestans colonization of Nicotiana benthamiana leaves. This is RxLR effector protein PITG_09218 from Phytophthora infestans (strain T30-4) (Potato late blight agent).